We begin with the raw amino-acid sequence, 410 residues long: Elongation factor Tu, apicoplast (410 aa).

The tr-type G domain maps to 10 to 214 (KQHINLGTIG…QIIDNIIIPT (205 aa)). Residues 19–26 (GHVDHGKT) form a G1 region. 19-26 (GHVDHGKT) lines the GTP pocket. Thr26 contributes to the Mg(2+) binding site. The G2 stretch occupies residues 60–64 (GITIN). Residues 81–84 (DCPG) are G3. GTP contacts are provided by residues 81 to 85 (DCPGH) and 136 to 139 (NKED). Residues 136–139 (NKED) form a G4 region. The G5 stretch occupies residues 174-176 (SAL).

The protein belongs to the TRAFAC class translation factor GTPase superfamily. Classic translation factor GTPase family. EF-Tu/EF-1A subfamily.

The protein resides in the plastid. Its subcellular location is the apicoplast. It catalyses the reaction GTP + H2O = GDP + phosphate + H(+). Functionally, GTP hydrolase that promotes the GTP-dependent binding of aminoacyl-tRNA to the A-site of ribosomes during protein biosynthesis. This is Elongation factor Tu, apicoplast (tufA) from Plasmodium falciparum (isolate 3D7).